The chain runs to 221 residues: Probable GTP-binding protein EngB (221 aa).

The 174-residue stretch at 32-205 (GIPQIAFAGR…RKIVDSLITT (174 aa)) folds into the EngB-type G domain. Residues 40-47 (GRSNAGKS), 67-71 (GKTKL), 85-88 (DLPG), 152-155 (TKID), and 184-186 (VSN) contribute to the GTP site. Mg(2+) is bound by residues Ser47 and Thr69.

The protein belongs to the TRAFAC class TrmE-Era-EngA-EngB-Septin-like GTPase superfamily. EngB GTPase family. Mg(2+) serves as cofactor.

Its function is as follows. Necessary for normal cell division and for the maintenance of normal septation. The sequence is that of Probable GTP-binding protein EngB from Leptospira borgpetersenii serovar Hardjo-bovis (strain JB197).